The primary structure comprises 413 residues: Serine hydroxymethyltransferase (413 aa).

Residues Leu117 and Gly121–Leu123 contribute to the (6S)-5,6,7,8-tetrahydrofolate site. Lys226 is modified (N6-(pyridoxal phosphate)lysine). Residues Glu239 and Ser349 to Phe351 contribute to the (6S)-5,6,7,8-tetrahydrofolate site.

This sequence belongs to the SHMT family. Homodimer. Pyridoxal 5'-phosphate is required as a cofactor.

It is found in the cytoplasm. The enzyme catalyses (6R)-5,10-methylene-5,6,7,8-tetrahydrofolate + glycine + H2O = (6S)-5,6,7,8-tetrahydrofolate + L-serine. Its pathway is one-carbon metabolism; tetrahydrofolate interconversion. The protein operates within amino-acid biosynthesis; glycine biosynthesis; glycine from L-serine: step 1/1. In terms of biological role, catalyzes the reversible interconversion of serine and glycine with tetrahydrofolate (THF) serving as the one-carbon carrier. This reaction serves as the major source of one-carbon groups required for the biosynthesis of purines, thymidylate, methionine, and other important biomolecules. Also exhibits THF-independent aldolase activity toward beta-hydroxyamino acids, producing glycine and aldehydes, via a retro-aldol mechanism. This is Serine hydroxymethyltransferase from Bacillus cereus (strain ATCC 10987 / NRS 248).